The sequence spans 130 residues: Small ribosomal subunit protein uS11 (130 aa).

The tract at residues 109 to 130 (EDVTPIPHDGTGRPGGKRGRRV) is disordered.

Belongs to the universal ribosomal protein uS11 family. In terms of assembly, part of the 30S ribosomal subunit.

Located on the platform of the 30S subunit. In Methanosphaera stadtmanae (strain ATCC 43021 / DSM 3091 / JCM 11832 / MCB-3), this protein is Small ribosomal subunit protein uS11.